The following is a 106-amino-acid chain: UPF0145 protein VC_A0951 (106 aa).

This sequence belongs to the UPF0145 family.

In Vibrio cholerae serotype O1 (strain ATCC 39315 / El Tor Inaba N16961), this protein is UPF0145 protein VC_A0951.